The chain runs to 87 residues: uncharacterized protein (87 aa).

The chain crosses the membrane as a helical span at residues 25–47 (FFWEVCNMILFIIIALCGYLLFS).

The protein resides in the membrane. This is an uncharacterized protein from Bacillus subtilis (strain 168).